A 654-amino-acid chain; its full sequence is NADPH-dependent diflavin oxidoreductase 1 (654 aa).

In terms of domain architecture, Flavodoxin-like spans 14-166 (ALVLYGSETG…TFIPWITDFR (153 aa)). FMN contacts are provided by residues 20-25 (SETGNA), 75-78 (STTG), and 113-122 (LGDSSYPKFN). Residues 235–485 (PDALTATLVE…QLQRGGLSSS (251 aa)) enclose the FAD-binding FR-type domain. FAD contacts are provided by residues R389, 419–422 (RQFS), and 458–461 (GVCT). NADP(+) contacts are provided by residues T500, 568 to 569 (SR), and 574 to 578 (KIYVQ). W654 contributes to the FAD binding site.

This sequence belongs to the NADPH-dependent diflavin oxidoreductase NDOR1 family. In the N-terminal section; belongs to the flavodoxin family. The protein in the C-terminal section; belongs to the flavoprotein pyridine nucleotide cytochrome reductase family. Interacts with dre2; as part of the cytosolic iron-sulfur (Fe-S) protein assembly (CIA) machinery. Requires FAD as cofactor. FMN serves as cofactor.

It is found in the cytoplasm. Its subcellular location is the mitochondrion. The catalysed reaction is 2 oxidized [2Fe-2S]-[protein] + NADPH = 2 reduced [2Fe-2S]-[protein] + NADP(+) + H(+). Its function is as follows. NADPH-dependent reductase which is a central component of the cytosolic iron-sulfur (Fe-S) protein assembly (CIA) machinery. Transfers electrons from NADPH via its FAD and FMN prosthetic groups to the [2Fe-2S] cluster of dre2, another key component of the CIA machinery. In turn, this reduced cluster provides electrons for assembly of cytosolic iron-sulfur cluster proteins. Positively controls H(2)O(2)-induced cell death. This chain is NADPH-dependent diflavin oxidoreductase 1, found in Aspergillus fumigatus (strain ATCC MYA-4609 / CBS 101355 / FGSC A1100 / Af293) (Neosartorya fumigata).